The sequence spans 264 residues: Membrane-spanning 4-domains subfamily A member 10 (264 aa).

The Cytoplasmic segment spans residues M1 to E57. The segment covering T17 to P37 has biased composition (polar residues). The segment at T17–S48 is disordered. A helical membrane pass occupies residues L58 to S78. Over T79–K89 the chain is Extracellular. The chain crosses the membrane as a helical span at residues S90–M110. Residues K111–K119 are Cytoplasmic-facing. A helical transmembrane segment spans residues M120 to I140. Topologically, residues S141–E169 are extracellular. Residues L170–A190 traverse the membrane as a helical segment. Topologically, residues W191–N264 are cytoplasmic.

Belongs to the MS4A family.

Its subcellular location is the membrane. Functionally, may be involved in signal transduction as a component of a multimeric receptor complex. This chain is Membrane-spanning 4-domains subfamily A member 10 (MS4A10), found in Pongo abelii (Sumatran orangutan).